A 630-amino-acid polypeptide reads, in one-letter code: E3 ubiquitin-protein ligase TRIM41 (630 aa).

The segment at 20-61 adopts an RING-type; degenerate zinc-finger fold; the sequence is CAICLDYFTDPVSIGCGHNFCRVCVTQLWGGEDEEDRDELDR. Over residues 51–75 the composition is skewed to acidic residues; the sequence is EDEEDRDELDREEEEEEVGEEEEVE. Disordered stretches follow at residues 51–97 and 148–176; these read EDEE…GDME and EDED…PPPA. Position 85 is a phosphothreonine (threonine 85). Positions 148-166 are enriched in acidic residues; the sequence is EDEDEEEEVLEEDEEEELD. The segment at 222-263 adopts a B box-type zinc-finger fold; that stretch reads NEQGICPRHQEALKLFCEVDEEAICVVCRESRSHKQHSVVPL. Residues cysteine 227, histidine 230, cysteine 249, and histidine 255 each coordinate Zn(2+). Residue lysine 256 forms a Glycyl lysine isopeptide (Lys-Gly) (interchain with G-Cter in SUMO2) linkage. Residues 281 to 374 are a coiled coil; sequence LRKHLEAVQK…AEAQERSQQG (94 aa). Positions 413 to 630 constitute a B30.2/SPRY domain; it reads LTDAIVRKMS…SKGTRIKLCP (218 aa). Residue serine 447 is modified to Phosphoserine. The segment at 503–535 is disordered; the sequence is ARESTHHKEKVGSGGSSVSSGDASSSRHHHRRR.

Belongs to the TRIM/RBCC family. As to quaternary structure, interacts with PRKCA. Interacts with NOD2. Interacts with TRIM17; this interaction prevents TRIM41 activity on ZSCAN2. Auto-ubiquitinated.

It is found in the cytoplasm. The protein resides in the nucleus. The enzyme catalyses S-ubiquitinyl-[E2 ubiquitin-conjugating enzyme]-L-cysteine + [acceptor protein]-L-lysine = [E2 ubiquitin-conjugating enzyme]-L-cysteine + N(6)-ubiquitinyl-[acceptor protein]-L-lysine.. The protein operates within protein modification; protein ubiquitination. In terms of biological role, E3 ligase that plays essential roles in innate antiviral response. Directly binds to influenza A virus or vesicular stomatitis virus nucleoproteins and targets them for ubiquitination and proteasomal degradation, thereby limiting viral infections. Activates the innate antiviral response by catalyzing monoubiquitination of CGAS, thereby activating CGAS. Also involved in innate antiviral response by mediating 'Lys-63'-linked polyubiquitylation of BCL10 which in turn hubs NEMO for activation of NF-kappa-B and IRF3 pathways. Catalyzes the ubiquitin-mediated degradation of other substrates including protein kinase C, ZSCAN21 or TOP3B suggesting additional roles besides its function in immune response. This Mus musculus (Mouse) protein is E3 ubiquitin-protein ligase TRIM41.